The following is a 329-amino-acid chain: Sex comb on midleg-like protein 1 (329 aa).

2 positions are modified to phosphoserine: serine 138 and serine 238. Residues 258–325 (WSVEAVVLFL…YYIDRLKQGK (68 aa)) form the SAM domain.

This sequence belongs to the SCM family.

Its subcellular location is the nucleus. Its function is as follows. Putative Polycomb group (PcG) protein. PcG proteins act by forming multiprotein complexes, which are required to maintain the transcriptionally repressive state of homeotic genes throughout development. May be involved in spermatogenesis during sexual maturation. This is Sex comb on midleg-like protein 1 (SCML1) from Nomascus leucogenys (Northern white-cheeked gibbon).